A 286-amino-acid polypeptide reads, in one-letter code: MANKSVTVGQLEIANDRPFTLFGGMNVLESRDMAMRVCEKYVAVTNKLNVPYIFKASFDKANRSSIHSYRGPGMEEGLKIFQELKQTFGVNIITDVHEIYQCQPVAEVVDIIQLPAFLARQTDLVEAMARTGAVINVKKPQFLSPGQMGNIVEKIVECGNQQIILCDRGTNFGYDNLVVDMLSFNIMKKVSDGCPVIFDVTHALQCRDPFGSASGGRRDQVTELARAGLATGLAGLFLEAHPDPNTAKCDGPSALPLDKLEAFVAQMKAIDNLVKSFAELDTACRD.

Belongs to the KdsA family.

The protein resides in the cytoplasm. It catalyses the reaction D-arabinose 5-phosphate + phosphoenolpyruvate + H2O = 3-deoxy-alpha-D-manno-2-octulosonate-8-phosphate + phosphate. It participates in carbohydrate biosynthesis; 3-deoxy-D-manno-octulosonate biosynthesis; 3-deoxy-D-manno-octulosonate from D-ribulose 5-phosphate: step 2/3. It functions in the pathway bacterial outer membrane biogenesis; lipopolysaccharide biosynthesis. The protein is 2-dehydro-3-deoxyphosphooctonate aldolase of Haemophilus ducreyi (strain 35000HP / ATCC 700724).